Reading from the N-terminus, the 609-residue chain is NADH-ubiquinone oxidoreductase chain 5 (609 aa).

Transmembrane regions (helical) follow at residues 6–26, 35–55, 84–104, 116–138, 140–160, 171–191, 240–260, 272–292, 300–319, 330–350, 365–385, 409–429, 456–476, 481–501, and 581–601; these read SSIL…MTNL, YATS…LLFF, YFSI…MQFS, RFIK…NNLF, LFIG…WWYG, AILY…WFCL, TPVS…FLMI, IMTA…ICAL, IVAF…LGIN, THAF…HSLN, MPFT…MPFL, MITL…IYFV, LALG…PTNI, MPWH…AIAL, and GLIK…FILH.

This sequence belongs to the complex I subunit 5 family. In terms of assembly, core subunit of respiratory chain NADH dehydrogenase (Complex I) which is composed of 45 different subunits.

It is found in the mitochondrion inner membrane. The enzyme catalyses a ubiquinone + NADH + 5 H(+)(in) = a ubiquinol + NAD(+) + 4 H(+)(out). Its function is as follows. Core subunit of the mitochondrial membrane respiratory chain NADH dehydrogenase (Complex I) which catalyzes electron transfer from NADH through the respiratory chain, using ubiquinone as an electron acceptor. Essential for the catalytic activity and assembly of complex I. The chain is NADH-ubiquinone oxidoreductase chain 5 from Rattus norvegicus (Rat).